The primary structure comprises 256 residues: GTP cyclohydrolase FolE2 (256 aa).

It belongs to the GTP cyclohydrolase IV family.

The catalysed reaction is GTP + H2O = 7,8-dihydroneopterin 3'-triphosphate + formate + H(+). It functions in the pathway cofactor biosynthesis; 7,8-dihydroneopterin triphosphate biosynthesis; 7,8-dihydroneopterin triphosphate from GTP: step 1/1. Converts GTP to 7,8-dihydroneopterin triphosphate. The protein is GTP cyclohydrolase FolE2 of Caldicellulosiruptor saccharolyticus (strain ATCC 43494 / DSM 8903 / Tp8T 6331).